The primary structure comprises 319 residues: tRNA uridine(34) hydroxylase (319 aa).

In terms of domain architecture, Rhodanese spans 127–221 (KQEDTVIIDA…YGKDPEVQGE (95 aa)). Residue C181 is the Cysteine persulfide intermediate of the active site.

This sequence belongs to the TrhO family.

The enzyme catalyses uridine(34) in tRNA + AH2 + O2 = 5-hydroxyuridine(34) in tRNA + A + H2O. Its function is as follows. Catalyzes oxygen-dependent 5-hydroxyuridine (ho5U) modification at position 34 in tRNAs. This is tRNA uridine(34) hydroxylase from Bacillus mycoides (strain KBAB4) (Bacillus weihenstephanensis).